The chain runs to 309 residues: Pyridoxal 5'-phosphate synthase subunit PDX1.1 (309 aa).

At methionine 1 the chain carries N-acetylmethionine. Residue aspartate 41 coordinates D-ribose 5-phosphate. Lysine 98 acts as the Schiff-base intermediate with D-ribose 5-phosphate in catalysis. Glycine 170 is a binding site for D-ribose 5-phosphate. Residue arginine 182 coordinates D-glyceraldehyde 3-phosphate. D-ribose 5-phosphate is bound by residues glycine 231 and 252–253; that span reads GS.

This sequence belongs to the PdxS/SNZ family. In terms of assembly, homodimer or heterodimer with PDX1.2 or PDX1.3. Interacts with PDX2. In terms of tissue distribution, expressed in flowers, shoots, leaves and weakly in roots.

It is found in the cytoplasm. It carries out the reaction aldehydo-D-ribose 5-phosphate + D-glyceraldehyde 3-phosphate + L-glutamine = pyridoxal 5'-phosphate + L-glutamate + phosphate + 3 H2O + H(+). It functions in the pathway cofactor biosynthesis; pyridoxal 5'-phosphate biosynthesis. Its function is as follows. Catalyzes the formation of pyridoxal 5'-phosphate from ribose 5-phosphate (RBP), glyceraldehyde 3-phosphate (G3P) and ammonia. The ammonia is provided by PDX2. Can also use ribulose 5-phosphate and dihydroxyacetone phosphate as substrates, resulting from enzyme-catalyzed isomerization of RBP and G3P, respectively. Also plays an indirect role in resistance to singlet oxygen-generating photosensitizers. This is Pyridoxal 5'-phosphate synthase subunit PDX1.1 (PDX11) from Arabidopsis thaliana (Mouse-ear cress).